A 355-amino-acid chain; its full sequence is Putative beta-lactamase HcpE (355 aa).

Residues 1 to 22 (MNIKILKILVGGLFFLSLNAHL) form the signal peptide. TPR repeat units lie at residues 27–60 (DNSF…GVSE), 63–96 (TQLG…DDRE), 98–131 (CFGL…LKHP), 132–166 (ESCY…DMAK), 202–240 (GQAC…NNSG), 245–275 (LGSM…MGSA), 276–311 (VSCS…MGDE), and 312–344 (VGCF…GMKQ). Intrachain disulfides connect Cys-54–Cys-62, Cys-90–Cys-98, Cys-126–Cys-134, Cys-160–Cys-168, Cys-197–Cys-205, Cys-234–Cys-242, Cys-270–Cys-278, Cys-306–Cys-314, and Cys-338–Cys-346.

Belongs to the hcp beta-lactamase family.

Its subcellular location is the secreted. The enzyme catalyses a beta-lactam + H2O = a substituted beta-amino acid. May hydrolyze 6-aminopenicillinic acid and 7-aminocephalosporanic acid (ACA) derivatives. This chain is Putative beta-lactamase HcpE (hcpE), found in Helicobacter pylori (strain J99 / ATCC 700824) (Campylobacter pylori J99).